The primary structure comprises 378 residues: Leukocyte elastase inhibitor (378 aa).

N-acetylmethionine is present on Met-1. Lys-137 carries the N6-acetyllysine modification. Ser-299 is subject to Phosphoserine. The interval Asp-350–Pro-378 is CARD-binding motif (CBM).

Belongs to the serpin family. Ov-serpin subfamily. In terms of assembly, monomer. Interacts (via C-terminus) with CASP1; CASP4 (via CARD domain) and CASP5; these interactions regulate the activity of inflammatory caspases. Interacts with PRTN3. Interacts with GZMH.

It is found in the secreted. It localises to the cytoplasm. The protein resides in the cytolytic granule. The protein localises to the early endosome. Its function is as follows. Neutrophil serine protease inhibitor that plays an essential role in the regulation of the innate immune response, inflammation and cellular homeostasis. Acts primarily to protect the cell from proteases released in the cytoplasm during stress or infection. These proteases are important in killing microbes but when released from granules, these potent enzymes also destroy host proteins and contribute to mortality. Regulates the activity of the neutrophil proteases elastase, cathepsin G, proteinase-3, chymase, chymotrypsin, and kallikrein-3. Also acts as a potent intracellular inhibitor of GZMH by directly blocking its proteolytic activity. During inflammation, limits the activity of inflammatory caspases CASP1, CASP4 and CASP5 by suppressing their caspase-recruitment domain (CARD) oligomerization and enzymatic activation. When secreted, promotes the proliferation of beta-cells via its protease inhibitory function. In terms of biological role, may be cleaved leading to a loss of its anti-protease activity and to the appearance of an endonuclease activity. However no catalytic site was identified. The polypeptide is Leukocyte elastase inhibitor (SERPINB1) (Sus scrofa (Pig)).